The following is a 420-amino-acid chain: 26S proteasome non-ATPase regulatory subunit 4 (420 aa).

The VWFA domain occupies 1-174; that stretch reads MSQEATIIAV…TGSHLISVAP (174 aa). UIM domains lie at 210–229, 255–274, and 288–307; these read AEDP…QRMR, SEEA…NNTE, and SEED…MGEE. The interval 392–420 is disordered; sequence RKAINALTKSQSQRGSKKDEKEDEDKQNS. Over residues 407 to 420 the composition is skewed to basic and acidic residues; it reads SKKDEKEDEDKQNS.

The protein belongs to the proteasome subunit S5A family. The 26S proteasome is composed of a core protease, known as the 20S proteasome, capped at one or both ends by the 19S regulatory complex (RC). The RC is composed of at least 18 different subunits in two subcomplexes, the base and the lid, which form the portions proximal and distal to the 20S proteolytic core, respectively.

Binds and presumably selects ubiquitin-conjugates for destruction. The polypeptide is 26S proteasome non-ATPase regulatory subunit 4 (Schistosoma mansoni (Blood fluke)).